Consider the following 496-residue polypeptide: Xylulose kinase (496 aa).

83–84 provides a ligand contact to substrate; it reads MH. The active-site Proton acceptor is the Asp-237.

This sequence belongs to the FGGY kinase family.

It carries out the reaction D-xylulose + ATP = D-xylulose 5-phosphate + ADP + H(+). Catalyzes the phosphorylation of D-xylulose to D-xylulose 5-phosphate. The protein is Xylulose kinase of Staphylococcus epidermidis (strain ATCC 35984 / DSM 28319 / BCRC 17069 / CCUG 31568 / BM 3577 / RP62A).